The sequence spans 54 residues: UPF0391 membrane protein Bpro_0879 (54 aa).

Helical transmembrane passes span 6–26 (VVFL…IAAG) and 30–50 (IAKI…VMGL).

It belongs to the UPF0391 family.

It is found in the cell membrane. In Polaromonas sp. (strain JS666 / ATCC BAA-500), this protein is UPF0391 membrane protein Bpro_0879.